The sequence spans 473 residues: Sun domain-containing protein 1 (473 aa).

Residues 1-47 form a disordered region; sequence MALRHTISPQFSNRHSPPVTRSVSRTGVHQPLDTSTPVTRRDSQPGT. Positions 7-47 are enriched in polar residues; the sequence is ISPQFSNRHSPPVTRSVSRTGVHQPLDTSTPVTRRDSQPGT. Coiled-coil stretches lie at residues 163–191 and 204–235; these read ISNL…LENV and EELK…STKI. The disordered stretch occupies residues 237-257; the sequence is HSTPEKAPETAPTASLPPSSQ. Residues 248–257 are compositionally biased toward polar residues; it reads PTASLPPSSQ. The helical transmembrane segment at 262–282 threads the bilayer; that stretch reads HITRRALLGVNVANSLIGASI. Residues 279 to 443 form the SUN domain; the sequence is GASIDHSCSS…YLIRVYGEPV (165 aa). The interval 443 to 473 is disordered; that stretch reads VDPPKETQPMTDNGTESKLESAIVNSVSETA.

Its subcellular location is the nucleus membrane. It localises to the nucleus envelope. In terms of biological role, involved in centrosome attachment to the nucleus. Required for zyg-12 localization to the nuclear envelope. Together with pot-1, it is required to anchor telomeres to the nuclear envelope in embryos. The polypeptide is Sun domain-containing protein 1 (Caenorhabditis elegans).